Consider the following 274-residue polypeptide: Large ribosomal subunit protein uL2cz/uL2cy (274 aa).

Disordered stretches follow at residues 1–22 and 225–274; these read MAIH…DSQV and PVDH…RRSK.

It belongs to the universal ribosomal protein uL2 family. As to quaternary structure, part of the 50S ribosomal subunit.

The protein resides in the plastid. It localises to the chloroplast. The sequence is that of Large ribosomal subunit protein uL2cz/uL2cy (rpl2-A) from Arabis hirsuta (Hairy rock-cress).